The sequence spans 261 residues: uncharacterized protein (261 aa).

Positions 1-22 (MIHSKKLTLGICLVLLIILIGG) are cleaved as a signal peptide. Cysteine 23 carries N-palmitoyl cysteine lipidation. Cysteine 23 carries S-diacylglycerol cysteine lipidation.

Belongs to the staphylococcal tandem lipoprotein family.

It is found in the cell membrane. This is an uncharacterized protein from Staphylococcus aureus (strain NCTC 8325 / PS 47).